Here is a 570-residue protein sequence, read N- to C-terminus: Formate--tetrahydrofolate ligase (570 aa).

An ATP-binding site is contributed by 65 to 72 (TPHGEGKT).

The protein belongs to the formate--tetrahydrofolate ligase family.

It carries out the reaction (6S)-5,6,7,8-tetrahydrofolate + formate + ATP = (6R)-10-formyltetrahydrofolate + ADP + phosphate. Its pathway is one-carbon metabolism; tetrahydrofolate interconversion. The polypeptide is Formate--tetrahydrofolate ligase (Shewanella putrefaciens (strain CN-32 / ATCC BAA-453)).